The sequence spans 121 residues: Large ribosomal subunit protein bL19 (121 aa).

Belongs to the bacterial ribosomal protein bL19 family.

Functionally, this protein is located at the 30S-50S ribosomal subunit interface and may play a role in the structure and function of the aminoacyl-tRNA binding site. The chain is Large ribosomal subunit protein bL19 from Bifidobacterium adolescentis (strain ATCC 15703 / DSM 20083 / NCTC 11814 / E194a).